Here is a 351-residue protein sequence, read N- to C-terminus: NAD-dependent protein deacetylase SIR2rp1 (351 aa).

A Deacetylase sirtuin-type domain is found at 10–325 (HVVGEPTFEG…RSFAQALGFG (316 aa)). Residues 37 to 57 (GAGI…TGLY) and 122 to 125 (QNID) contribute to the NAD(+) site. Residue H142 is the Proton acceptor of the active site. The Zn(2+) site is built by C150, C153, C174, and C177. Residues 213-215 (GTS) and 238-240 (NLE) each bind NAD(+). Residues 260–284 (SSYRLSTGNGNGSKISSGDSSNSSS) form a disordered region. Low complexity predominate over residues 265–284 (STGNGNGSKISSGDSSNSSS). NAD(+) is bound at residue C311.

This sequence belongs to the sirtuin family. Class I subfamily. It depends on Zn(2+) as a cofactor.

It is found in the nucleus. The protein localises to the chromosome. The protein resides in the telomere. It carries out the reaction N(6)-acetyl-L-lysyl-[protein] + NAD(+) + H2O = 2''-O-acetyl-ADP-D-ribose + nicotinamide + L-lysyl-[protein]. In terms of biological role, NAD-dependent protein deacetylase, which is involved in repression of RNA polymerase I-mediated expression immediately adjacent to telomeres. It is however not involved in antigenic variation and subtelomeric variant surface glycoprotein (VSG) gene silencing. Plays a role in DNA damage response. Also has ADP-ribosylation activity in vitro. The sequence is that of NAD-dependent protein deacetylase SIR2rp1 (SIR2rp1) from Trypanosoma brucei brucei (strain 927/4 GUTat10.1).